Consider the following 273-residue polypeptide: 4-hydroxy-tetrahydrodipicolinate reductase (273 aa).

Residues 12–17 and glutamate 38 each bind NAD(+); that span reads GAGGRM. Residue arginine 39 participates in NADP(+) binding. NAD(+) is bound by residues 102–104 and 126–129; these read GTT and AANF. Histidine 159 functions as the Proton donor/acceptor in the catalytic mechanism. Histidine 160 lines the (S)-2,3,4,5-tetrahydrodipicolinate pocket. The Proton donor role is filled by lysine 163. Position 169–170 (169–170) interacts with (S)-2,3,4,5-tetrahydrodipicolinate; sequence GT.

It belongs to the DapB family. Homotetramer.

The protein resides in the cytoplasm. The enzyme catalyses (S)-2,3,4,5-tetrahydrodipicolinate + NAD(+) + H2O = (2S,4S)-4-hydroxy-2,3,4,5-tetrahydrodipicolinate + NADH + H(+). It carries out the reaction (S)-2,3,4,5-tetrahydrodipicolinate + NADP(+) + H2O = (2S,4S)-4-hydroxy-2,3,4,5-tetrahydrodipicolinate + NADPH + H(+). It participates in amino-acid biosynthesis; L-lysine biosynthesis via DAP pathway; (S)-tetrahydrodipicolinate from L-aspartate: step 4/4. Functionally, catalyzes the conversion of 4-hydroxy-tetrahydrodipicolinate (HTPA) to tetrahydrodipicolinate. This Enterobacter sp. (strain 638) protein is 4-hydroxy-tetrahydrodipicolinate reductase.